Reading from the N-terminus, the 108-residue chain is uncharacterized protein (108 aa).

A compositionally biased stretch (basic and acidic residues) spans 1-10 (MDMLHNKCSD). The disordered stretch occupies residues 1-27 (MDMLHNKCSDAIKSTSNSNLSNEVDKQ). Polar residues predominate over residues 12–22 (IKSTSNSNLSN).

This is an uncharacterized protein from Saccharomyces cerevisiae (strain ATCC 204508 / S288c) (Baker's yeast).